The sequence spans 385 residues: Phosphatidate cytidylyltransferase, mitochondrial (385 aa).

It belongs to the TAM41 family. It depends on Mg(2+) as a cofactor. The cofactor is Co(2+). Cu(2+) is required as a cofactor.

The protein resides in the mitochondrion inner membrane. The enzyme catalyses a 1,2-diacyl-sn-glycero-3-phosphate + CTP + H(+) = a CDP-1,2-diacyl-sn-glycerol + diphosphate. It functions in the pathway phospholipid metabolism; CDP-diacylglycerol biosynthesis; CDP-diacylglycerol from sn-glycerol 3-phosphate: step 3/3. Functionally, catalyzes the formation of CDP-diacylglycerol (CDP-DAG) from phosphatidic acid (PA) in the mitochondrial inner membrane. Required for the biosynthesis of the dimeric phospholipid cardiolipin, which stabilizes supercomplexes of the mitochondrial respiratory chain in the mitochondrial inner membrane. The polypeptide is Phosphatidate cytidylyltransferase, mitochondrial (TAM41) (Saccharomyces cerevisiae (strain ATCC 204508 / S288c) (Baker's yeast)).